The chain runs to 175 residues: Large ribosomal subunit protein uL10 (175 aa).

It belongs to the universal ribosomal protein uL10 family. In terms of assembly, part of the ribosomal stalk of the 50S ribosomal subunit. The N-terminus interacts with L11 and the large rRNA to form the base of the stalk. The C-terminus forms an elongated spine to which L12 dimers bind in a sequential fashion forming a multimeric L10(L12)X complex.

Its function is as follows. Forms part of the ribosomal stalk, playing a central role in the interaction of the ribosome with GTP-bound translation factors. This is Large ribosomal subunit protein uL10 from Prochlorococcus marinus (strain SARG / CCMP1375 / SS120).